Consider the following 693-residue polypeptide: DNA ligase (693 aa).

Residues 45–49 (DSEYD), 94–95 (SI), and E131 each bind NAD(+). K133 serves as the catalytic N6-AMP-lysine intermediate. The NAD(+) site is built by R154, E190, K307, and K331. The Zn(2+) site is built by C429, C432, C447, and C453. Positions 615-693 (ASSSKLEGKT…EEGLLSLLAE (79 aa)) constitute a BRCT domain.

The protein belongs to the NAD-dependent DNA ligase family. LigA subfamily. Mg(2+) is required as a cofactor. It depends on Mn(2+) as a cofactor.

The enzyme catalyses NAD(+) + (deoxyribonucleotide)n-3'-hydroxyl + 5'-phospho-(deoxyribonucleotide)m = (deoxyribonucleotide)n+m + AMP + beta-nicotinamide D-nucleotide.. Functionally, DNA ligase that catalyzes the formation of phosphodiester linkages between 5'-phosphoryl and 3'-hydroxyl groups in double-stranded DNA using NAD as a coenzyme and as the energy source for the reaction. It is essential for DNA replication and repair of damaged DNA. This chain is DNA ligase, found in Methylobacillus flagellatus (strain ATCC 51484 / DSM 6875 / VKM B-1610 / KT).